Consider the following 312-residue polypeptide: Ribosomal RNA small subunit methyltransferase H (312 aa).

S-adenosyl-L-methionine-binding positions include 34 to 36 (GGH), Asp54, Phe78, Asp100, and Gln107.

It belongs to the methyltransferase superfamily. RsmH family.

The protein localises to the cytoplasm. It catalyses the reaction cytidine(1402) in 16S rRNA + S-adenosyl-L-methionine = N(4)-methylcytidine(1402) in 16S rRNA + S-adenosyl-L-homocysteine + H(+). Specifically methylates the N4 position of cytidine in position 1402 (C1402) of 16S rRNA. The sequence is that of Ribosomal RNA small subunit methyltransferase H from Salmonella choleraesuis (strain SC-B67).